Here is a 532-residue protein sequence, read N- to C-terminus: Cytochrome P450 monooxygenase criE (532 aa).

A helical membrane pass occupies residues Val18–Leu38. Cys441 serves as a coordination point for heme.

This sequence belongs to the cytochrome P450 family. The cofactor is heme.

The protein localises to the membrane. The enzyme catalyses preechinulin + reduced [NADPH--hemoprotein reductase] + O2 = neoechinulin A + oxidized [NADPH--hemoprotein reductase] + 2 H2O + H(+). The protein operates within secondary metabolite biosynthesis. It functions in the pathway alkaloid biosynthesis. In terms of biological role, cytochrome P450 monooxygenase; part of the gene cluster that mediates the biosynthesis of echinulin family alkaloid. The pathway begins with the biosynthesis of the cyclic dipeptide cyclo-L-Trp-L-Ala (cyclo-TA) by the NRPS criC via condensation of L-alanine and L-tryptophan. The prenyltransferase criA then catalyzes the first prenylation step, a reverse prenylation reaction at C2, to yield preechinulin. Preechinulin is the substrate of the cytochrome P450 monooxygenase criE that catalyzes the formation of the double bond between C10 and C11 to produce neoechulin A. The unique prenyltransferase criF functions as a competitive enzyme with criE for preechinulin metabolization and uses preechinulin for effective regiospecific prenylations. Preechinulin is prenylated by criF at C5 or C7. C7-prenylation leads to accumulation of tardioxopiperazine B without further modification by criF. In contrast, the C5-prenylated tardioxopiperazine A can be prenylated again by criF, predominantly at C7 to form echinulin or less frequently at C4 to give variecolorin L. CriF also accepts neoechilunin A to produce varlecolorin G (prenylation at C5) or isoechinulin A (prenylation at C7). CriF further converts isoechinulin A into dehydroechinulin. Moreover, a yet unidentified enzyme can also convert neoechilunin A into neoechilunin B by introducing a double bond between positions C14 and C17 and thus provides a further substrate to criF for C5 and C7 prenylation. In Aspergillus cristatus (Chinese Fuzhuan brick tea-fermentation fungus), this protein is Cytochrome P450 monooxygenase criE.